The primary structure comprises 378 residues: Small ribosomal subunit protein bS1 (378 aa).

S1 motif domains are found at residues 1–66 (ETVT…VSRR), 87–155 (GMEV…LGLK), 172–242 (GTKL…LGLK), 259–329 (GDRV…LGVK), and 346–378 (GAIV…ASEA).

This sequence belongs to the bacterial ribosomal protein bS1 family.

In terms of biological role, binds mRNA; thus facilitating recognition of the initiation point. It is needed to translate mRNA with a short Shine-Dalgarno (SD) purine-rich sequence. The polypeptide is Small ribosomal subunit protein bS1 (rpsA) (Providencia sp).